The chain runs to 161 residues: Troponin C, slow skeletal and cardiac muscles (161 aa).

M1 is subject to N-acetylmethionine. EF-hand domains follow at residues 16 to 51, 52 to 87, 92 to 127, and 128 to 161; these read QKNE…LGQN, PTPE…CMKD, KSEE…TGET, and ITED…KGVE. Ca(2+) is bound by residues D65, D67, S69, T71, and E76. Residue S98 is modified to Phosphoserine. Residues D105, N107, D109, Y111, E116, D141, N143, D145, R147, and E152 each contribute to the Ca(2+) site.

The protein belongs to the troponin C family.

Its function is as follows. Troponin is the central regulatory protein of striated muscle contraction. Tn consists of three components: Tn-I which is the inhibitor of actomyosin ATPase, Tn-T which contains the binding site for tropomyosin and Tn-C. The binding of calcium to Tn-C abolishes the inhibitory action of Tn on actin filaments. The chain is Troponin C, slow skeletal and cardiac muscles (TNNC1) from Bos taurus (Bovine).